The sequence spans 184 residues: Elongation factor P (184 aa).

This sequence belongs to the elongation factor P family.

It is found in the cytoplasm. The protein operates within protein biosynthesis; polypeptide chain elongation. Functionally, involved in peptide bond synthesis. Stimulates efficient translation and peptide-bond synthesis on native or reconstituted 70S ribosomes in vitro. Probably functions indirectly by altering the affinity of the ribosome for aminoacyl-tRNA, thus increasing their reactivity as acceptors for peptidyl transferase. In Variovorax paradoxus (strain S110), this protein is Elongation factor P.